Consider the following 641-residue polypeptide: Epithelial sodium channel subunit beta (641 aa).

The Cytoplasmic segment spans residues 1–50 (MHVKKYLLKCLHRLQKGPGYTYKELLVWYCDNTNTHGPKRIIREGPKKKA). The chain crosses the membrane as a helical span at residues 51–71 (MWFLITLLFASLVCWQWGVFI). Topologically, residues 72 to 533 (KTYLSWEVSV…GGQFGFWMGG (462 aa)) are extracellular. 9 cysteine pairs are disulfide-bonded: Cys98–Cys273, Cys185–Cys190, Cys197–Cys204, Cys250–Cys257, Cys362–Cys449, Cys387–Cys445, Cys391–Cys441, Cys400–Cys427, and Cys402–Cys416. Residue Asn141 is glycosylated (N-linked (GlcNAc...) asparagine). 2 N-linked (GlcNAc...) asparagine glycosylation sites follow: Asn261 and Asn379. The chain crosses the membrane as a helical span at residues 534-554 (SVLCLIEFAEIIIDFVWITII). Over 555 to 641 (KLVALAKGLR…VESDSEGDAV (87 aa)) the chain is Cytoplasmic. A disordered region spans residues 596–641 (GHRSPDAEAYPDEQALPIPGTPPPNYDSLRLQPLDVVESDSEGDAV). Positions 617-621 (PPPNY) match the PY motif; recruits WW domain-containing proteins and is thereby required for ubiquitination and inhibition of the channel by NEDD4 and NEDD4L motif. Acidic residues predominate over residues 632–641 (VESDSEGDAV). 2 positions are modified to phosphoserine: Ser634 and Ser636.

The protein belongs to the amiloride-sensitive sodium channel (TC 1.A.6) family. SCNN1B subfamily. As to quaternary structure, component of the heterotrimeric epithelial sodium channel (ENaC) composed of an alpha/SCNN1A, a beta/SCNN1B and a gamma/SCNN1G subunit. Interacts with WWP1 (via WW domains). Interacts with WWP2 (via WW domains); inhibits the channel. Interacts with the full-length immature form of PCSK9 (pro-PCSK9). Interacts (N-glycosylated) with BPIFA1; the interaction is direct and inhibits the proteolytic processing of SCNN1A and SCNN1G and the activation of ENaC. In terms of processing, ubiquitinated. Can be ubiquitinated at multiple sites and undergo monoubiquitination and polyubiquitination. Ubiquitination by NEDD4 or NEDD4L inhibits the ENaC channel through endocytosis, intracellular retention and degradation of its individual subunits. However, some studies could not confirm the ubiquitination of this subunit of the ENaC. Phosphorylated on serine and threonine residues. Aldosterone and insulin increase the basal level of phosphorylation. Post-translationally, N-glycosylated. N-glycosylation is required for interaction with BPIFA1.

The protein localises to the apical cell membrane. Its subcellular location is the cytoplasmic vesicle membrane. It catalyses the reaction Na(+)(in) = Na(+)(out). With respect to regulation, originally identified and characterized by its inhibition by the diuretic drug amiloride. In terms of biological role, this is one of the three pore-forming subunits of the heterotrimeric epithelial sodium channel (ENaC), a critical regulator of sodium balance and fluid homeostasis. ENaC operates in epithelial tissues, where it mediates the electrodiffusion of sodium ions from extracellular fluid through the apical membrane of cells, with water following osmotically. It plays a key role in maintaining sodium homeostasis through electrogenic sodium reabsorption in the kidneys. Additionally, ENaC is essential for airway surface liquid homeostasis, which is crucial for proper mucus clearance. In Oryctolagus cuniculus (Rabbit), this protein is Epithelial sodium channel subunit beta.